We begin with the raw amino-acid sequence, 571 residues long: Phototropic-responsive NPH3 family protein NPY1 (571 aa).

The BTB domain maps to 29–97 (SDVTIHVGEV…CYGMTVTLNA (69 aa)). An NPH3 domain is found at 210–468 (DWWVEDVCEL…VQVLYFEQLR (259 aa)). Tyr409 bears the Phosphotyrosine mark. The tract at residues 475–571 (ASVAASSHSP…SSRRRRHSIS (97 aa)) is disordered. Residues 484–504 (PVEKTEENKGEEATKKVELSK) show a composition bias toward basic and acidic residues. The segment covering 540–562 (SNKSSEVSSGSSQSPPAKSSSSS) has biased composition (low complexity).

The protein belongs to the NPH3 family. In terms of assembly, component of a complex made of PINs (e.g. PIN1 and PIN2), MAB4/MELs (e.g. NPY1/MAB4 and NPY5/MEL1) and AGC kinases (e.g. D6PK and PID) at the plasma membrane. Binds directly to PIN2 and PID. As to expression, accumulates in organ primordia such as cotyledons, leaves and floral organs. Expressed mainly in the apical regions of embryos including cotyledon tips and the apical meristem. Induced by the transcription factor ARF5/MP at the periphery of inflorescence meristems. Highly expressed in primary root tips and radicles.

It is found in the late endosome. The protein resides in the cell membrane. The protein localises to the cytoplasm. Its subcellular location is the cytosol. Its pathway is protein modification; protein ubiquitination. May act as a substrate-specific adapter of an E3 ubiquitin-protein ligase complex (CUL3-RBX1-BTB) which mediates the ubiquitination and subsequent proteasomal degradation of target proteins. Coregulates with PID the auxin-mediated plant organogenesis. Regulates basipetal PIN proteins (e.g. PIN1) polarization to establish inward auxin transport from the L1 surface of incipient organ primordia; this process is essential for the progression of flower organs development. Recruited to the plasma membrane by PINs (e.g. PIN1 and PIN2) and, in concert with AGC kinases-mediated (e.g. D6PK and PID) PINs phosphorylation, maintains their cell polarity (apical or basal) through limiting lateral diffusion-based escape. Induces auxin response in inner cell layers through a shift in PIN1 localization. Influences cotyledon development by regulating auxin distribution mainly in the protodermal cell layer. May play an essential role in root gravitropic responses. The polypeptide is Phototropic-responsive NPH3 family protein NPY1 (Arabidopsis thaliana (Mouse-ear cress)).